We begin with the raw amino-acid sequence, 266 residues long: Beta-lactamase OXA-10 (266 aa).

Residues 1–19 (MKTFAAYVIIACLSSTALA) form the signal peptide. An intrachain disulfide couples C44 to C51. Catalysis depends on S67, which acts as the Acyl-ester intermediate. K70 is subject to N6-carboxylysine. S115, T206, F208, and R250 together coordinate a beta-lactam.

This sequence belongs to the class-D beta-lactamase family. In terms of assembly, dimer.

It localises to the periplasm. The catalysed reaction is a beta-lactam + H2O = a substituted beta-amino acid. Activated, with respect to most beta-lactam substrates, in the presence of 0.05 M sodium bicarbonate. Class D beta-lactamase which confers resistance to the beta-lactam antibiotics, including penicillin, carbenicillin and oxacillin, and also some cephalosporins. Confers weak resistance to some carbapenems, in E.coli strain C600Z1. Acts via hydrolysis of the beta-lactam ring. Has penicillin- and cephalosporin-hydrolyzing activities. This is Beta-lactamase OXA-10 from Pseudomonas aeruginosa.